The primary structure comprises 225 residues: uncharacterized protein (225 aa).

The interval 1-48 is disordered; the sequence is MTQLVTRARSARGSTLGEQPRQDQLDFADHTGTAGDGNDGAAAASGPV. The segment covering 20–29 has biased composition (basic and acidic residues); that stretch reads PRQDQLDFAD. The HTH merR-type domain maps to 64–136; sequence GYRGPSACQI…LHNIRVAVDH (73 aa). Residues 201–225 form a disordered region; that stretch reads DGGESIAAPEDELASRRKHRDRKIG. A compositionally biased stretch (basic residues) spans 216-225; it reads RRKHRDRKIG.

This is an uncharacterized protein from Mycobacterium tuberculosis (strain CDC 1551 / Oshkosh).